We begin with the raw amino-acid sequence, 544 residues long: Chaperonin GroEL (544 aa).

ATP-binding positions include 29-32 (TLGP), 86-90 (DGTTT), G413, 477-479 (DVL), and D493.

It belongs to the chaperonin (HSP60) family. Forms a cylinder of 14 subunits composed of two heptameric rings stacked back-to-back. Interacts with the co-chaperonin GroES.

It is found in the cytoplasm. The catalysed reaction is ATP + H2O + a folded polypeptide = ADP + phosphate + an unfolded polypeptide.. Functionally, together with its co-chaperonin GroES, plays an essential role in assisting protein folding. The GroEL-GroES system forms a nano-cage that allows encapsulation of the non-native substrate proteins and provides a physical environment optimized to promote and accelerate protein folding. The sequence is that of Chaperonin GroEL from Clostridium kluyveri (strain NBRC 12016).